The chain runs to 349 residues: Aspartate-semialdehyde dehydrogenase (349 aa).

NADP(+) is bound by residues 12–15 and 39–40; these read TGSV and NS. Arg-113 lines the phosphate pocket. Cys-148 (acyl-thioester intermediate) is an active-site residue. Position 175 (Gln-175) interacts with substrate. 178–179 serves as a coordination point for NADP(+); sequence SG. Glu-201 is a binding site for substrate. Lys-204 contributes to the phosphate binding site. Substrate is bound at residue Arg-234. The active-site Proton acceptor is the His-241. 326–327 contributes to the NADP(+) binding site; it reads NT.

The protein belongs to the aspartate-semialdehyde dehydrogenase family. In terms of assembly, homodimer.

The catalysed reaction is L-aspartate 4-semialdehyde + phosphate + NADP(+) = 4-phospho-L-aspartate + NADPH + H(+). It functions in the pathway amino-acid biosynthesis; L-lysine biosynthesis via DAP pathway; (S)-tetrahydrodipicolinate from L-aspartate: step 2/4. It participates in amino-acid biosynthesis; L-methionine biosynthesis via de novo pathway; L-homoserine from L-aspartate: step 2/3. The protein operates within amino-acid biosynthesis; L-threonine biosynthesis; L-threonine from L-aspartate: step 2/5. Functionally, catalyzes the NADPH-dependent formation of L-aspartate-semialdehyde (L-ASA) by the reductive dephosphorylation of L-aspartyl-4-phosphate. The chain is Aspartate-semialdehyde dehydrogenase from Leptospira interrogans serogroup Icterohaemorrhagiae serovar copenhageni (strain Fiocruz L1-130).